The chain runs to 202 residues: MARYTGPMTKKSRRLGVDLVGGDSAYERRPYPPGQHGRGRIKESEYLLQLREKQKARFTYGVLEKQFHNYYTEASRRAGKTGDNLLQLLECRLDNVVYRAGFARTRRHARQLVTHGHFKVNGKKVDIPSFQVTAHDVIDVREKSLEMTPFIVARETHGERVVPAWLEAIPSRMRVLVHQLPVRAQIDIPVQEQLIVEYYSKK.

An S4 RNA-binding domain is found at cysteine 91 to histidine 157.

Belongs to the universal ribosomal protein uS4 family. Part of the 30S ribosomal subunit. Contacts protein S5. The interaction surface between S4 and S5 is involved in control of translational fidelity.

One of the primary rRNA binding proteins, it binds directly to 16S rRNA where it nucleates assembly of the body of the 30S subunit. Functionally, with S5 and S12 plays an important role in translational accuracy. The sequence is that of Small ribosomal subunit protein uS4 from Nocardioides sp. (strain ATCC BAA-499 / JS614).